The chain runs to 246 residues: NAD-dependent protein deacylase (246 aa).

The Deacetylase sirtuin-type domain occupies 1–237 (MSLPYRHVVI…PRLVEEILAA (237 aa)). 13–32 (GAGISAESGIQTFRAQDGLW) lines the NAD(+) pocket. Substrate-binding residues include Tyr-57 and Arg-60. 94–97 (QNID) is a binding site for NAD(+). His-112 functions as the Proton acceptor in the catalytic mechanism. The Zn(2+) site is built by Cys-120 and Cys-139. NAD(+) contacts are provided by residues 179 to 181 (GTS), 205 to 207 (NLE), and Ala-223.

This sequence belongs to the sirtuin family. Class III subfamily. Zn(2+) is required as a cofactor.

The protein localises to the cytoplasm. It carries out the reaction N(6)-acetyl-L-lysyl-[protein] + NAD(+) + H2O = 2''-O-acetyl-ADP-D-ribose + nicotinamide + L-lysyl-[protein]. The catalysed reaction is N(6)-succinyl-L-lysyl-[protein] + NAD(+) + H2O = 2''-O-succinyl-ADP-D-ribose + nicotinamide + L-lysyl-[protein]. Its function is as follows. NAD-dependent lysine deacetylase and desuccinylase that specifically removes acetyl and succinyl groups on target proteins. Modulates the activities of several proteins which are inactive in their acylated form. This Vibrio cholerae serotype O1 (strain ATCC 39315 / El Tor Inaba N16961) protein is NAD-dependent protein deacylase.